A 317-amino-acid polypeptide reads, in one-letter code: Olfactory receptor 6P1 (317 aa).

Residues 1–25 are Extracellular-facing; the sequence is MRNLSGGHVEEFVLVGFPTTPPLQL. The N-linked (GlcNAc...) asparagine glycan is linked to asparagine 3. A helical membrane pass occupies residues 26 to 46; that stretch reads LLFVLFFAIYLLTLLENALIV. Residues 47-54 are Cytoplasmic-facing; it reads FTIWLAPS. A helical transmembrane segment spans residues 55–75; that stretch reads LHRPMYFFLGHLSFLELWYIN. The Extracellular segment spans residues 76-99; it reads VTIPRLLAAFLTQDGRVSYVGCMT. A disulfide bridge connects residues cysteine 97 and cysteine 189. A helical membrane pass occupies residues 100–120; the sequence is QLYFFIALACTECVLLAVMAY. Topologically, residues 121-139 are cytoplasmic; sequence DRYLAICGPLLYPSLMPSS. A helical transmembrane segment spans residues 140–160; it reads LATRLAAASWGSGFFSSMMKL. Residues 161-197 are Extracellular-facing; it reads LFISQLSYCGPNIINHFFCDISPLLNLTCSDKEQAEL. A glycan (N-linked (GlcNAc...) asparagine) is linked at asparagine 186. The chain crosses the membrane as a helical span at residues 198 to 217; the sequence is VDFLLALVMILLPLLAVVSS. Residues 218-237 are Cytoplasmic-facing; the sequence is YTAIIAAILRIPTSRGRHKA. Residues 238–258 traverse the membrane as a helical segment; it reads FSTCAAHLAVVVIYYSSTLFT. Topologically, residues 259 to 271 are extracellular; the sequence is YARPRAMYTFNHN. The chain crosses the membrane as a helical span at residues 272–292; that stretch reads KIISVLYTIIVPFFNPAIYCL. At 293–317 the chain is on the cytoplasmic side; that stretch reads RNKEVKEAFRKTVMGRCHYPRDVQD.

This sequence belongs to the G-protein coupled receptor 1 family.

It is found in the cell membrane. Its function is as follows. Odorant receptor. The chain is Olfactory receptor 6P1 (OR6P1) from Homo sapiens (Human).